The sequence spans 518 residues: Cytochrome P450 monooxygenase COX1 (518 aa).

The helical transmembrane segment at 7-25 threads the bilayer; that stretch reads VLIALSSIVVAYFVKTALA. 5 N-linked (GlcNAc...) asparagine glycosylation sites follow: Asn-48, Asn-100, Asn-292, Asn-302, and Asn-351. Cys-450 lines the heme pocket. Residue Asn-457 is glycosylated (N-linked (GlcNAc...) asparagine).

Belongs to the cytochrome P450 family. The cofactor is heme.

The protein localises to the membrane. The protein operates within secondary metabolite biosynthesis. In terms of biological role, cytochrome P450 monooxygenase; part of the gene cluster that mediates the biosynthesis of alpha-cuprenene and oxidized derivatives. The alpha-cuprenene synthase COP6 is the only sesquiterpene synthase identified in C.cinereus that appears to be part of a biosynthetic gene cluster and is highly specific since it catalyzes the cyclization of (2E,6E)-farnesyl diphosphate into only one product, alpha-cuprenene. The cytochrome P450 monooxygenase COX2 then oxidizes the cyclohexadiene ring of alpha-cuprenene at positions 1 and 4, yielding first alpha-cuparene, followed by alpha-cuparophenol and a further yet unidentified compound resulting from one additional oxidation step. The cytochrome P450 monooxygenase COX1 then likely catalyzes the oxidation at position 9 of the pentane ring of alpha-cuprenene to give the corresponding hydroxy or ketone derivatives. The sequence is that of Cytochrome P450 monooxygenase COX1 from Coprinopsis cinerea (strain Okayama-7 / 130 / ATCC MYA-4618 / FGSC 9003) (Inky cap fungus).